The following is a 380-amino-acid chain: Crotonobetainyl-CoA reductase (380 aa).

The protein belongs to the acyl-CoA dehydrogenase family. As to quaternary structure, homotetramer. FAD serves as cofactor.

It localises to the cytoplasm. The enzyme catalyses 4-(trimethylamino)butanoyl-CoA + oxidized [electron-transfer flavoprotein] + H(+) = crotonobetainyl-CoA + reduced [electron-transfer flavoprotein]. Its pathway is amine and polyamine metabolism; carnitine metabolism. Its function is as follows. Catalyzes the reduction of crotonobetainyl-CoA to gamma-butyrobetainyl-CoA. The sequence is that of Crotonobetainyl-CoA reductase from Escherichia coli O6:K15:H31 (strain 536 / UPEC).